A 247-amino-acid chain; its full sequence is MRYPMSKLAYHRVLLKLSGEALMGSADYGIDPKVINRLAGEVIEAQNAGAELALVIGGGNIFRGAGLAAKGMDRVTGDQMGMLATIINALAMQDALEKLGTKVRVMSAIKINNVCEDFIRRRAIRHLEKSRITIFAAGTGNPFFTTDSGAALRAIEIGADLLLKATKVDGIYNKDPQKHCDAVKYSTLSYDEVISQNLEVMDTAAFALARDSNLPLRIFDIEQPGVLLRILHGEEIGTLVKERNSKS.

ATP is bound at residue 16-19; that stretch reads KLSG. UMP is bound at residue Gly58. ATP is bound by residues Gly59 and Arg63. UMP contacts are provided by residues Asp78 and 139-146; that span reads TGNPFFTT. ATP is bound by residues Thr166, Tyr172, and Asp175.

The protein belongs to the UMP kinase family. Homohexamer.

The protein resides in the cytoplasm. The catalysed reaction is UMP + ATP = UDP + ADP. The protein operates within pyrimidine metabolism; CTP biosynthesis via de novo pathway; UDP from UMP (UMPK route): step 1/1. Its activity is regulated as follows. Inhibited by UTP. In terms of biological role, catalyzes the reversible phosphorylation of UMP to UDP. This chain is Uridylate kinase, found in Xylella fastidiosa (strain Temecula1 / ATCC 700964).